Reading from the N-terminus, the 299-residue chain is MNSSNPLVITLLGPTASGKTALALDIAERLDLPVFNVDSRQLYREMDIGTAKPTAEQQARIPHHLLDLRTPDQPITLQEFQAIATPCINAALEQRDVALLVGGSGLYLKALTSGLQPPAVAPQPQLRQQLTALGQQICHPLLQAADPKAAAKIAPADAVRTQRALEVLYGSGQPMSRQATAAPPPWRVLELGLNPANLRQRIQQRTEQLYRDGLVDETQRLSERYGADLPLLQTIGYSEALQMIGGSLTTTEAVRITSQRTRQFAKRQRTWFRRQHNPHWLPDQATLTDAMTLIEQHLR.

ATP is bound at residue 13–20 (GPTASGKT). Residue 15-20 (TASGKT) participates in substrate binding. An interaction with substrate tRNA region spans residues 38–41 (DSRQ).

The protein belongs to the IPP transferase family. In terms of assembly, monomer. Requires Mg(2+) as cofactor.

The catalysed reaction is adenosine(37) in tRNA + dimethylallyl diphosphate = N(6)-dimethylallyladenosine(37) in tRNA + diphosphate. In terms of biological role, catalyzes the transfer of a dimethylallyl group onto the adenine at position 37 in tRNAs that read codons beginning with uridine, leading to the formation of N6-(dimethylallyl)adenosine (i(6)A). This Synechococcus sp. (strain CC9605) protein is tRNA dimethylallyltransferase.